A 298-amino-acid chain; its full sequence is ATP phosphoribosyltransferase (298 aa).

This sequence belongs to the ATP phosphoribosyltransferase family. Long subfamily. Mg(2+) is required as a cofactor.

Its subcellular location is the cytoplasm. It catalyses the reaction 1-(5-phospho-beta-D-ribosyl)-ATP + diphosphate = 5-phospho-alpha-D-ribose 1-diphosphate + ATP. The protein operates within amino-acid biosynthesis; L-histidine biosynthesis; L-histidine from 5-phospho-alpha-D-ribose 1-diphosphate: step 1/9. With respect to regulation, feedback inhibited by histidine. Functionally, catalyzes the condensation of ATP and 5-phosphoribose 1-diphosphate to form N'-(5'-phosphoribosyl)-ATP (PR-ATP). Has a crucial role in the pathway because the rate of histidine biosynthesis seems to be controlled primarily by regulation of HisG enzymatic activity. The polypeptide is ATP phosphoribosyltransferase (Tolumonas auensis (strain DSM 9187 / NBRC 110442 / TA 4)).